A 231-amino-acid chain; its full sequence is ADP-ribose pyrophosphatase (231 aa).

Position 2 is an N-acetylserine (phenylalanine 2). Residues tryptophan 46, tryptophan 64–aspartate 65, arginine 69, and arginine 103 each bind substrate. One can recognise a Nudix hydrolase domain in the interval glycine 75–arginine 214. Alanine 115 contacts Mg(2+). The Nudix box signature appears at glycine 116 to glycine 137. Leucine 117 is a binding site for substrate. Glutamate 131 and glutamate 135 together coordinate Mg(2+). Aspartate 152 is a substrate binding site. Glutamate 185 contacts Mg(2+).

Belongs to the Nudix hydrolase family. NudF subfamily. Requires Mg(2+) as cofactor. It depends on Mn(2+) as a cofactor.

It carries out the reaction ADP-D-ribose + H2O = D-ribose 5-phosphate + AMP + 2 H(+). The protein is ADP-ribose pyrophosphatase (YSA1) of Saccharomyces cerevisiae (strain ATCC 204508 / S288c) (Baker's yeast).